The following is a 648-amino-acid chain: Threonine--tRNA ligase (648 aa).

Positions 1-63 (MAQISLTFPD…TQDAAIAIHT (63 aa)) constitute a TGS domain. The interval 247 to 544 (DHRKLGREMN…LIEEHAGKLP (298 aa)) is catalytic. Residues cysteine 344, histidine 395, and histidine 521 each coordinate Zn(2+).

The protein belongs to the class-II aminoacyl-tRNA synthetase family. Homodimer. Requires Zn(2+) as cofactor.

The protein localises to the cytoplasm. The enzyme catalyses tRNA(Thr) + L-threonine + ATP = L-threonyl-tRNA(Thr) + AMP + diphosphate + H(+). Its function is as follows. Catalyzes the attachment of threonine to tRNA(Thr) in a two-step reaction: L-threonine is first activated by ATP to form Thr-AMP and then transferred to the acceptor end of tRNA(Thr). Also edits incorrectly charged L-seryl-tRNA(Thr). The protein is Threonine--tRNA ligase of Ruegeria sp. (strain TM1040) (Silicibacter sp.).